The chain runs to 114 residues: uncharacterized protein (114 aa).

Over residues 1–20 the composition is skewed to basic and acidic residues; it reads MGLSRWHDKNSRPAEEKSEE. The segment at 1-22 is disordered; that stretch reads MGLSRWHDKNSRPAEEKSEEMQ.

Functionally, may be involved in phosphatase regulation and/or generation of precursor metabolites and energy. This is an uncharacterized protein from Saccharomyces cerevisiae (strain ATCC 204508 / S288c) (Baker's yeast).